We begin with the raw amino-acid sequence, 976 residues long: Probable outer membrane protein PmpA (976 aa).

The signal sequence occupies residues 1 to 50 (MNQVIKTIALCYQKYISRASNKTFSIHNTLSLSLLPKCLLGSLIIYTSHA). An Autotransporter domain is found at 671–976 (GNAIPNSLWS…SLSCGGYVGF (306 aa)).

This sequence belongs to the PMP outer membrane protein family.

The protein resides in the secreted. Its subcellular location is the cell wall. It localises to the cell outer membrane. The protein is Probable outer membrane protein PmpA (pmpA) of Chlamydia muridarum (strain MoPn / Nigg).